Consider the following 692-residue polypeptide: Pentatricopeptide repeat-containing protein At2g04860 (692 aa).

17 PPR repeats span residues Asp-12 to Pro-46, Asn-47 to Arg-83, Phe-84 to Arg-114, Asp-115 to Pro-149, Ser-150 to Leu-184, Asp-185 to Lys-215, Ser-216 to Ile-250, Asp-280 to Gly-314, Thr-316 to Ile-345, Asp-346 to Thr-380, Lys-381 to Thr-411, Pro-412 to Pro-447, Asp-448 to Asn-482, Glu-483 to Pro-513, Cys-514 to Pro-548, Asp-549 to Pro-584, and Thr-585 to Lys-615. Positions Val-620–Ile-692 are type E motif; degenerate.

This sequence belongs to the PPR family. PCMP-E subfamily.

This chain is Pentatricopeptide repeat-containing protein At2g04860 (PCMP-E74), found in Arabidopsis thaliana (Mouse-ear cress).